We begin with the raw amino-acid sequence, 373 residues long: Alanine racemase (373 aa).

Catalysis depends on lysine 40, which acts as the Proton acceptor; specific for D-alanine. Lysine 40 is subject to N6-(pyridoxal phosphate)lysine. Arginine 140 is a substrate binding site. The active-site Proton acceptor; specific for L-alanine is the tyrosine 268. Methionine 315 provides a ligand contact to substrate.

This sequence belongs to the alanine racemase family. Pyridoxal 5'-phosphate is required as a cofactor.

The catalysed reaction is L-alanine = D-alanine. It functions in the pathway amino-acid biosynthesis; D-alanine biosynthesis; D-alanine from L-alanine: step 1/1. In terms of biological role, catalyzes the interconversion of L-alanine and D-alanine. May also act on other amino acids. In Limosilactobacillus fermentum (strain NBRC 3956 / LMG 18251) (Lactobacillus fermentum), this protein is Alanine racemase (alr).